The primary structure comprises 641 residues: MGPPLKLFKNQKYQELKQECIKDSRLFCDPTFLPENDSLFYNRLLPGKVVWKRPQDICDDPHLIVGNISNHQLTQGRLGHKPMVSAFSCLAVQESHWTKTIPNHKEQEWDPQKTEKYAGIFHFRFWHFGEWTEVVIDDLLPTINGDLVFSFSTSMNEFWNALLEKAYAKLLGCYEALDGLTITDIIVDFTGTLAETVDMQKGRYTELVEEKYKLFGELYKTFTKGGLICCSIESPNQEEQEVETDWGLLKGHTYTMTDIRKIRLGERLVEVFSAEKVYMVRLRNPLGRQEWSGPWSEISEEWQQLTASDRKNLGLVMSDDGEFWMSLEDFCRNFHKLNVCRNVNNPIFGRKELESVLGCWTVDDDPLMNRSGGCYNNRDTFLQNPQYIFTVPEDGHKVIMSLQQKDLRTYRRMGRPDNYIIGFELFKVEMNRKFRLHHLYIQERAGTSTYIDTRTVFLSKYLKKGNYVLVPTMFQHGRTSEFLLRIFSEVPVQLRELTLDMPKMSCWNLARGYPKVVTQITVHSAEDLEKKYANETVNPYLVIKCGKEEVRSPVQKNTVHAIFDTQAIFYRRTTDIPIIVQVWNSRKFCDQFLGQVTLDADPSDCRDLKSLYLRKKGGPTAKVKQGHISFKVISSDDLTEL.

One can recognise a Calpain catalytic domain in the interval 26–343 (LFCDPTFLPE…FHKLNVCRNV (318 aa)). The segment at 344–495 (NNPIFGRKEL…IFSEVPVQLR (152 aa)) is domain III. The C2 domain maps to 498 to 621 (TLDMPKMSCW…YLRKKGGPTA (124 aa)).

It belongs to the peptidase C2 family. As to quaternary structure, interacts (via domain III) with microtubules. Interacts (via domain II) with ARHGEF2 (via the N-terminal zinc finger). As to expression, expressed only in placenta.

The protein localises to the cytoplasm. The protein resides in the perinuclear region. Its subcellular location is the cytoskeleton. It is found in the spindle. Its function is as follows. Microtubule-stabilizing protein that may be involved in the regulation of microtubule dynamics and cytoskeletal organization. May act as a regulator of RAC1 activity through interaction with ARHGEF2 to control lamellipodial formation and cell mobility. Does not seem to have protease activity as it has lost the active site residues. This chain is Calpain-6 (CAPN6), found in Homo sapiens (Human).